The primary structure comprises 272 residues: Glutamate racemase (272 aa).

Substrate is bound by residues aspartate 9–serine 10 and tyrosine 41–glycine 42. Cysteine 73 (proton donor/acceptor) is an active-site residue. Position 74–75 (asparagine 74–threonine 75) interacts with substrate. Cysteine 183 serves as the catalytic Proton donor/acceptor. Residue threonine 184–histidine 185 participates in substrate binding.

The protein belongs to the aspartate/glutamate racemases family.

The enzyme catalyses L-glutamate = D-glutamate. The protein operates within cell wall biogenesis; peptidoglycan biosynthesis. In terms of biological role, provides the (R)-glutamate required for cell wall biosynthesis. The sequence is that of Glutamate racemase from Shewanella sp. (strain MR-7).